Reading from the N-terminus, the 637-residue chain is Biosynthetic arginine decarboxylase (637 aa).

At lysine 101 the chain carries N6-(pyridoxal phosphate)lysine. 286-296 (FDVGGGLAVDY) lines the substrate pocket.

The protein belongs to the Orn/Lys/Arg decarboxylase class-II family. SpeA subfamily. Requires Mg(2+) as cofactor. Pyridoxal 5'-phosphate is required as a cofactor.

It catalyses the reaction L-arginine + H(+) = agmatine + CO2. It functions in the pathway amine and polyamine biosynthesis; agmatine biosynthesis; agmatine from L-arginine: step 1/1. Its function is as follows. Catalyzes the biosynthesis of agmatine from arginine. The protein is Biosynthetic arginine decarboxylase of Shewanella woodyi (strain ATCC 51908 / MS32).